We begin with the raw amino-acid sequence, 164 residues long: UPF0304 protein KPK_1463 (164 aa).

Belongs to the UPF0304 family.

This is UPF0304 protein KPK_1463 from Klebsiella pneumoniae (strain 342).